A 316-amino-acid polypeptide reads, in one-letter code: Olfactory receptor 10H3 (316 aa).

The Extracellular segment spans residues 1–25 (MPGQNYRTISEFILSGFSAFPQQLL). Residues 26–46 (PVLFLLYLLMFLFTLLGNLLI) traverse the membrane as a helical segment. At 47 to 54 (MATVWIER) the chain is on the cytoplasmic side. A helical membrane pass occupies residues 55–75 (RLHTPMYLFLCALSISEILFT). The Extracellular segment spans residues 76 to 99 (VAITPRMLADLLFTHRSITFVACA). A disulfide bridge connects residues C98 and C190. A helical membrane pass occupies residues 100–120 (IQMFFSFMFGFTHSFLLMVMG). At 121–139 (YDHYVTICHPLHYNMLMSP) the chain is on the cytoplasmic side. Residues 140-160 (RGCAHLVAWTWAGGSVMGMMV) form a helical membrane-spanning segment. Topologically, residues 161–197 (TMMVFHLTFCGSNVIHHFLCHVLSLLKLACGSKTSSV) are extracellular. A helical membrane pass occupies residues 198-218 (IMGVMLVCVTALIGCLFLIIL). At 219–238 (SFVFIVAAILRIPSAEGRHK) the chain is on the cytoplasmic side. Residues 239–259 (TFSTCVSHLTVVVMHYSFASL) form a helical membrane-spanning segment. The Extracellular segment spans residues 260 to 272 (IYLKPKGLHSMYS). Residues 273-293 (DALMATTYTVFTPFLSPIIFS) form a helical membrane-spanning segment. Topologically, residues 294–316 (LRNKELKNAINKNFCRRFCPLSS) are cytoplasmic.

Belongs to the G-protein coupled receptor 1 family.

Its subcellular location is the cell membrane. In terms of biological role, odorant receptor. The polypeptide is Olfactory receptor 10H3 (OR10H3) (Homo sapiens (Human)).